Consider the following 80-residue polypeptide: Metallothionein-like protein type 2, MT2-22 (80 aa).

Belongs to the metallothionein superfamily. Type 15 family.

Its function is as follows. Metallothioneins have a high content of cysteine residues that bind various heavy metals. The polypeptide is Metallothionein-like protein type 2, MT2-22 (Brassica juncea (Indian mustard)).